The chain runs to 318 residues: NADH-quinone oxidoreductase subunit H 2 (318 aa).

The next 9 membrane-spanning stretches (helical) occupy residues L4–F24, L77–P97, V106–A126, L146–F166, L179–A199, L214–E234, I238–L258, V262–L282, and F293–A313.

The protein belongs to the complex I subunit 1 family. As to quaternary structure, NDH-1 is composed of 14 different subunits. Subunits NuoA, H, J, K, L, M, N constitute the membrane sector of the complex.

It is found in the cell inner membrane. It carries out the reaction a quinone + NADH + 5 H(+)(in) = a quinol + NAD(+) + 4 H(+)(out). NDH-1 shuttles electrons from NADH, via FMN and iron-sulfur (Fe-S) centers, to quinones in the respiratory chain. The immediate electron acceptor for the enzyme in this species is believed to be ubiquinone. Couples the redox reaction to proton translocation (for every two electrons transferred, four hydrogen ions are translocated across the cytoplasmic membrane), and thus conserves the redox energy in a proton gradient. This subunit may bind ubiquinone. The sequence is that of NADH-quinone oxidoreductase subunit H 2 from Cereibacter sphaeroides (strain ATCC 17029 / ATH 2.4.9) (Rhodobacter sphaeroides).